Consider the following 93-residue polypeptide: Putative pterin-4-alpha-carbinolamine dehydratase (93 aa).

This sequence belongs to the pterin-4-alpha-carbinolamine dehydratase family.

The catalysed reaction is (4aS,6R)-4a-hydroxy-L-erythro-5,6,7,8-tetrahydrobiopterin = (6R)-L-erythro-6,7-dihydrobiopterin + H2O. This chain is Putative pterin-4-alpha-carbinolamine dehydratase, found in Chloroflexus aurantiacus (strain ATCC 29366 / DSM 635 / J-10-fl).